A 293-amino-acid polypeptide reads, in one-letter code: MQIIHTIEELRQALAPARQQGKKIGFVPTMGYLHKGHLELVRRARVENDVTLVSIFVNPLQFGANEDLGRYPRDLERDAGLLHDAQVDYLFAPTVSDMYPRPMQTVVDVPPLGNQMEGEARPGHFAGVATVVSKLFNIVGPDAAYFGEKDFQQLVIIRRMVDDMAIPVRIVGVETVREDDGLACSSRNVYLTPEQRRAAIIVPQALDEADRLYRSGMDDPDALEAAIRTFIGRQPLAVPEVIAIRDPETLERLPALQGRPILVALFVRVGATRLLDNRVIGHAAPQITQERAA.

Met-30–His-37 contacts ATP. The active-site Proton donor is the His-37. Gln-61 is a (R)-pantoate binding site. Gln-61 is a beta-alanine binding site. Gly-147–Asp-150 provides a ligand contact to ATP. Residue Gln-153 coordinates (R)-pantoate. Residues Val-176 and Cys-184–Arg-187 each bind ATP.

It belongs to the pantothenate synthetase family. Homodimer.

The protein localises to the cytoplasm. It carries out the reaction (R)-pantoate + beta-alanine + ATP = (R)-pantothenate + AMP + diphosphate + H(+). Its pathway is cofactor biosynthesis; (R)-pantothenate biosynthesis; (R)-pantothenate from (R)-pantoate and beta-alanine: step 1/1. Functionally, catalyzes the condensation of pantoate with beta-alanine in an ATP-dependent reaction via a pantoyl-adenylate intermediate. The chain is Pantothenate synthetase from Brucella melitensis biotype 2 (strain ATCC 23457).